The primary structure comprises 578 residues: MEVNGEIYRVAGPVVTVIGIKPRMYDVVKVGHEGLMGEVIRIKGEQATVQVYEDTSGLKPGEPVMNTGLPLSVELGPGLLESIYDGIQRPLPVLQEKMGNFIQRGVTANGLDRERVWEFKPTVSKGDEVKGGNILGLVQETKNIEHKIMVPPSISGTIKEIKAGSFKVDETICVLTDGTEISMMQKWPVRGPRPVAKKLMPTKPLITGQRILDGMFPIAKGGTAAIPGPFGSGKTVTQQQLAKWSDTDIVVYIGCGERGNEMADVLNEFPELEDPKTGRPLMERTVLIANTSNMPVAAREASVYTGITIAEYYRDMGYDVSLMADSSSRWAEAMREISSRLEEMPGEEGYPAYLSARLSEFYERAGAVNSLAGLDGSITVIGAVSPPGGDFSEPVTQNTLRIVKVFWALDAKLSQRRHFPSINWLTSYSLYTQGLADWYSENVGADWTQLRDDAMDLLQQESELQEIVQLVGSDALPEDQQLTLEVARMVREYFLQQNAFHPVDTYCPFDKQYKLLKSITRYGELATAALESGVPMNKIITIKSKDELAKVKFEENFDAALDVVMKKMDEEFAQIGGN.

228–235 (GPFGSGKT) is a binding site for ATP.

Belongs to the ATPase alpha/beta chains family. In terms of assembly, has multiple subunits with at least A(3), B(3), C, D, E, F, H, I and proteolipid K(x).

It is found in the cell membrane. It carries out the reaction ATP + H2O + 4 H(+)(in) = ADP + phosphate + 5 H(+)(out). In terms of biological role, component of the A-type ATP synthase that produces ATP from ADP in the presence of a proton gradient across the membrane. The A chain is the catalytic subunit. This is A-type ATP synthase subunit A from Methanococcoides burtonii (strain DSM 6242 / NBRC 107633 / OCM 468 / ACE-M).